Consider the following 570-residue polypeptide: Probable diguanylate cyclase DgcQ (570 aa).

2 helical membrane passes run 20–40 (FGPG…STLL) and 360–380 (IALT…WGVI). The GGDEF domain occupies 428 to 563 (QPFSVIQLDL…GRNRICASDA (136 aa)). Mg(2+) is bound at residue aspartate 436. Substrate contacts are provided by asparagine 444, histidine 449, and aspartate 453. Glutamate 479 serves as a coordination point for Mg(2+). The active-site Proton acceptor is the glutamate 479.

In terms of assembly, homodimer. Mg(2+) serves as cofactor.

It is found in the cell inner membrane. The catalysed reaction is 2 GTP = 3',3'-c-di-GMP + 2 diphosphate. It participates in glycan metabolism; bacterial cellulose biosynthesis. Its pathway is purine metabolism; 3',5'-cyclic di-GMP biosynthesis. Catalyzes the synthesis of cyclic-di-GMP (c-di-GMP) via the condensation of 2 GTP molecules. Cyclic-di-GMP is a second messenger which controls cell surface-associated traits in bacteria. Involved in the regulation of cellulose production. The polypeptide is Probable diguanylate cyclase DgcQ (Salmonella choleraesuis (strain SC-B67)).